Consider the following 439-residue polypeptide: UDP-N-acetylmuramoylalanine--D-glutamate ligase (439 aa).

An ATP-binding site is contributed by 116–122 (GSNGKTT).

It belongs to the MurCDEF family.

The protein localises to the cytoplasm. It carries out the reaction UDP-N-acetyl-alpha-D-muramoyl-L-alanine + D-glutamate + ATP = UDP-N-acetyl-alpha-D-muramoyl-L-alanyl-D-glutamate + ADP + phosphate + H(+). The protein operates within cell wall biogenesis; peptidoglycan biosynthesis. In terms of biological role, cell wall formation. Catalyzes the addition of glutamate to the nucleotide precursor UDP-N-acetylmuramoyl-L-alanine (UMA). The sequence is that of UDP-N-acetylmuramoylalanine--D-glutamate ligase from Shewanella oneidensis (strain ATCC 700550 / JCM 31522 / CIP 106686 / LMG 19005 / NCIMB 14063 / MR-1).